The chain runs to 343 residues: UDP-3-O-acylglucosamine N-acyltransferase (343 aa).

Residue H239 is the Proton acceptor of the active site.

Belongs to the transferase hexapeptide repeat family. LpxD subfamily. Homotrimer.

It carries out the reaction a UDP-3-O-[(3R)-3-hydroxyacyl]-alpha-D-glucosamine + a (3R)-hydroxyacyl-[ACP] = a UDP-2-N,3-O-bis[(3R)-3-hydroxyacyl]-alpha-D-glucosamine + holo-[ACP] + H(+). It participates in bacterial outer membrane biogenesis; LPS lipid A biosynthesis. In terms of biological role, catalyzes the N-acylation of UDP-3-O-acylglucosamine using 3-hydroxyacyl-ACP as the acyl donor. Is involved in the biosynthesis of lipid A, a phosphorylated glycolipid that anchors the lipopolysaccharide to the outer membrane of the cell. The sequence is that of UDP-3-O-acylglucosamine N-acyltransferase from Vibrio vulnificus (strain YJ016).